The following is a 291-amino-acid chain: Halorhodopsin (291 aa).

Residues 1–30 (MTETLPPVTESAVALQAEVTQRELFEFVLN) are Extracellular-facing. A helical membrane pass occupies residues 31–56 (DPLLASSLYINIALAGLSILLFVFMT). Topologically, residues 57–62 (RGLDDP) are cytoplasmic. The chain crosses the membrane as a helical span at residues 63–86 (RAKLIAVSTILVPVVSIASYTGLA). The Extracellular portion of the chain corresponds to 87 to 120 (SGLTISVLEMPAGHFAEGSSVMLGGEEVDGVVTM). The chain crosses the membrane as a helical span at residues 121 to 142 (WGRYLTWALSTPMILLALGLLA). Residues 143 to 145 (GSN) lie on the Cytoplasmic side of the membrane. Residues 146-169 (ATKLFTAITFDIAMCVTGLAAALT) form a helical membrane-spanning segment. At 170-172 (TSS) the chain is on the extracellular side. The helical transmembrane segment at 173–195 (HLMRWFWYAISCACFLVVLYILL) threads the bilayer. Topologically, residues 196–207 (VEWAQDAKAAGT) are cytoplasmic. A helical membrane pass occupies residues 208–231 (ADMFNTLKLLTVVMWLGYPIVWAL). Over 232-240 (GVEGIAVLP) the chain is Extracellular. The chain crosses the membrane as a helical span at residues 241 to 269 (VGVTSWGYSFLDIVAKYIFAFLLLNYLTS). Lysine 256 bears the N6-(retinylidene)lysine mark. Over 270-291 (NESVVSGSILDVPSASGTPADD) the chain is Cytoplasmic.

This sequence belongs to the archaeal/bacterial/fungal opsin family.

Its subcellular location is the cell membrane. Functionally, light-driven anion pump. Binding affinity for the anions is in the order, bromide &gt; chloride &gt; nitrate &gt; azide &gt; bromate and binding is pH dependent. This chain is Halorhodopsin (hop), found in Natronomonas pharaonis (Natronobacterium pharaonis).